Consider the following 54-residue polypeptide: Photosystem II reaction center protein K (54 aa).

The propeptide occupies 1–17; the sequence is MSFITLNNFFNTNTFFG. A helical membrane pass occupies residues 29–49; it reads LIDVLPIIPVLFFLLAFVWQA.

It belongs to the PsbK family. In terms of assembly, PSII is composed of 1 copy each of membrane proteins PsbA, PsbB, PsbC, PsbD, PsbE, PsbF, PsbH, PsbI, PsbJ, PsbK, PsbL, PsbM, PsbT, PsbY, PsbZ, Psb30/Ycf12, at least 3 peripheral proteins of the oxygen-evolving complex and a large number of cofactors. It forms dimeric complexes.

The protein resides in the plastid. The protein localises to the chloroplast thylakoid membrane. Functionally, one of the components of the core complex of photosystem II (PSII). PSII is a light-driven water:plastoquinone oxidoreductase that uses light energy to abstract electrons from H(2)O, generating O(2) and a proton gradient subsequently used for ATP formation. It consists of a core antenna complex that captures photons, and an electron transfer chain that converts photonic excitation into a charge separation. This is Photosystem II reaction center protein K from Euglena gracilis.